Reading from the N-terminus, the 288-residue chain is Ankyrin repeat and SOCS box protein 8 (288 aa).

S17 carries the phosphoserine modification. 4 ANK repeats span residues 52-81 (GTLK…EVNA), 85-113 (YNRT…NPNA), 117-146 (NRDT…SVNA), and 150-179 (NNDT…EVRV). The region spanning 235-288 (QLCEKLTVLCSAPGTLKTLSRYAVRRSLGLQYLPDAVKGLPLPASLKEYLLLIE) is the SOCS box domain.

Belongs to the ankyrin SOCS box (ASB) family. Interacts with TBK1; this interaction promotes TBK1 proteasomal degradation. Post-translationally, phosphorylated by TBK1.

The protein resides in the cytoplasm. Its pathway is protein modification; protein ubiquitination. May be a substrate-recognition component of a SCF-like ECS (Elongin-Cullin-SOCS-box protein) E3 ubiquitin-protein ligase complex which mediates the ubiquitination and subsequent proteasomal degradation of target proteins. Inhibits IFN-beta production through the IRF3 signaling pathway by targeting TBK1 via 'Lys-48'-linked ubiquitination, leading to its proteasomal degradation. The chain is Ankyrin repeat and SOCS box protein 8 (ASB8) from Bos taurus (Bovine).